We begin with the raw amino-acid sequence, 902 residues long: Cytosolic 10-formyltetrahydrofolate dehydrogenase (902 aa).

A hydrolase domain region spans residues 1–310 (MKIAVIGQSL…PASQYYKTAD (310 aa)). 88–90 (QFI) is a binding site for (6R)-10-formyltetrahydrofolate. The active-site Proton donor is the His-106. Asp-142 serves as a coordination point for (6R)-10-formyltetrahydrofolate. Residues 318–395 (DEEKKFSEEI…EFIQMVVRRL (78 aa)) form the Carrier domain. O-(pantetheine 4'-phosphoryl)serine is present on Ser-354. The tract at residues 417–902 (TVKIPHQLFI…LKTKAVTIEY (486 aa)) is aldehyde dehydrogenase domain. Residues 571 to 573 (IPW), 597 to 600 (KPAQ), 630 to 635 (GSLIGQ), 650 to 651 (GS), and 673 to 674 (EL) contribute to the NADP(+) site. The active-site Proton acceptor is Glu-673. Cys-707 (proton donor) is an active-site residue. NADP(+) is bound by residues Lys-757 and 804–806 (ESF).

This sequence in the N-terminal section; belongs to the GART family. The protein in the C-terminal section; belongs to the aldehyde dehydrogenase family. ALDH1L subfamily. In terms of assembly, homotetramer. In terms of processing, phosphopantetheinylation at Ser-354 by AASDHPPT is required for the formyltetrahydrofolate dehydrogenase activity.

It is found in the cytoplasm. Its subcellular location is the cytosol. It catalyses the reaction (6R)-10-formyltetrahydrofolate + NADP(+) + H2O = (6S)-5,6,7,8-tetrahydrofolate + CO2 + NADPH + H(+). In terms of biological role, cytosolic 10-formyltetrahydrofolate dehydrogenase that catalyzes the NADP(+)-dependent conversion of 10-formyltetrahydrofolate to tetrahydrofolate and carbon dioxide. May also have an NADP(+)-dependent aldehyde dehydrogenase activity towards formaldehyde, acetaldehyde, propionaldehyde, and benzaldehyde. Regulates reduced folate pools as well as glycine metabolism. In Xenopus tropicalis (Western clawed frog), this protein is Cytosolic 10-formyltetrahydrofolate dehydrogenase (aldh1l1).